Consider the following 643-residue polypeptide: 1-deoxy-D-xylulose-5-phosphate synthase (643 aa).

Thiamine diphosphate is bound by residues His-72 and 113–115; that span reads GHA. Asp-144 contacts Mg(2+). Thiamine diphosphate-binding positions include 145 to 146, Asn-174, Tyr-287, and Glu-370; that span reads GA. Position 174 (Asn-174) interacts with Mg(2+).

This sequence belongs to the transketolase family. DXPS subfamily. Homodimer. Mg(2+) serves as cofactor. It depends on thiamine diphosphate as a cofactor.

The enzyme catalyses D-glyceraldehyde 3-phosphate + pyruvate + H(+) = 1-deoxy-D-xylulose 5-phosphate + CO2. The protein operates within metabolic intermediate biosynthesis; 1-deoxy-D-xylulose 5-phosphate biosynthesis; 1-deoxy-D-xylulose 5-phosphate from D-glyceraldehyde 3-phosphate and pyruvate: step 1/1. Its function is as follows. Catalyzes the acyloin condensation reaction between C atoms 2 and 3 of pyruvate and glyceraldehyde 3-phosphate to yield 1-deoxy-D-xylulose-5-phosphate (DXP). The polypeptide is 1-deoxy-D-xylulose-5-phosphate synthase (Prochlorococcus marinus (strain SARG / CCMP1375 / SS120)).